Reading from the N-terminus, the 689-residue chain is DNA ligase (689 aa).

NAD(+) contacts are provided by residues 51 to 55 (DSEYD), 100 to 101 (SL), and glutamate 129. Lysine 131 (N6-AMP-lysine intermediate) is an active-site residue. NAD(+) contacts are provided by arginine 152, glutamate 189, lysine 308, and lysine 332. Zn(2+)-binding residues include cysteine 426, cysteine 429, cysteine 444, and cysteine 450. Residues 609–689 (ADEQPLKGQT…ELLALLAANS (81 aa)) form the BRCT domain.

This sequence belongs to the NAD-dependent DNA ligase family. LigA subfamily. Mg(2+) is required as a cofactor. Mn(2+) serves as cofactor.

It carries out the reaction NAD(+) + (deoxyribonucleotide)n-3'-hydroxyl + 5'-phospho-(deoxyribonucleotide)m = (deoxyribonucleotide)n+m + AMP + beta-nicotinamide D-nucleotide.. In terms of biological role, DNA ligase that catalyzes the formation of phosphodiester linkages between 5'-phosphoryl and 3'-hydroxyl groups in double-stranded DNA using NAD as a coenzyme and as the energy source for the reaction. It is essential for DNA replication and repair of damaged DNA. The protein is DNA ligase of Shewanella sp. (strain ANA-3).